Here is a 188-residue protein sequence, read N- to C-terminus: Adenine phosphoribosyltransferase (188 aa).

It belongs to the purine/pyrimidine phosphoribosyltransferase family. As to quaternary structure, homodimer.

The protein localises to the cytoplasm. It catalyses the reaction AMP + diphosphate = 5-phospho-alpha-D-ribose 1-diphosphate + adenine. Its pathway is purine metabolism; AMP biosynthesis via salvage pathway; AMP from adenine: step 1/1. Catalyzes a salvage reaction resulting in the formation of AMP, that is energically less costly than de novo synthesis. The polypeptide is Adenine phosphoribosyltransferase (Salinispora tropica (strain ATCC BAA-916 / DSM 44818 / JCM 13857 / NBRC 105044 / CNB-440)).